The sequence spans 359 residues: 3-dehydroquinate synthase (359 aa).

Residues Asp-71–Lys-76, Gly-105–Asp-109, Thr-129–Thr-130, Lys-142, Lys-151, and Thr-169–Thr-172 each bind NAD(+). Residues Glu-184, His-247, and His-264 each contribute to the Zn(2+) site.

It belongs to the sugar phosphate cyclases superfamily. Dehydroquinate synthase family. It depends on NAD(+) as a cofactor. The cofactor is Co(2+). Requires Zn(2+) as cofactor.

It is found in the cytoplasm. It carries out the reaction 7-phospho-2-dehydro-3-deoxy-D-arabino-heptonate = 3-dehydroquinate + phosphate. Its pathway is metabolic intermediate biosynthesis; chorismate biosynthesis; chorismate from D-erythrose 4-phosphate and phosphoenolpyruvate: step 2/7. Its function is as follows. Catalyzes the conversion of 3-deoxy-D-arabino-heptulosonate 7-phosphate (DAHP) to dehydroquinate (DHQ). This chain is 3-dehydroquinate synthase, found in Neisseria meningitidis serogroup B (strain ATCC BAA-335 / MC58).